A 2512-amino-acid chain; its full sequence is Isonitrile lipopeptide synthase (2512 aa).

2 Carrier domains span residues Ala935–Asp1003 and Ala1984–Ala2059. An O-(pantetheine 4'-phosphoryl)serine mark is found at Ser963 and Ser2019. The Thioester reductase (TE) domain occupies Leu2112–Ile2372.

The protein belongs to the ATP-dependent AMP-binding enzyme family. Pantetheine 4'-phosphate is required as a cofactor.

It catalyses the reaction 2 a (3R)-3-isocyanyl-fatty acyl-[ACP] + L-lysine + ATP + 2 NADPH = an isonitrile lipopeptide + 2 holo-[ACP] + AMP + diphosphate + 2 NADP(+). Its function is as follows. Nonribosomal peptide synthetase (NRPS) involved in the biosynthesis of a unique class of isonitrile lipopeptides (INLPs) that seem to function as virulence factors in M.tuberculosis and to play a role in metal acquisition. Catalyzes the final step in the pathway, i.e. the condensation of a (3R)-3-isocyanyl-fatty acyl-[ACP] to both amino groups of a lysine, producing isonitrile lipopeptides. The protein is Isonitrile lipopeptide synthase of Mycobacterium tuberculosis (strain ATCC 25618 / H37Rv).